The sequence spans 377 residues: Succinyl-diaminopimelate desuccinylase (377 aa).

A Zn(2+)-binding site is contributed by His68. Asp70 is a catalytic residue. Residue Asp101 coordinates Zn(2+). Residue Glu135 is the Proton acceptor of the active site. Residues Glu136, Glu164, and His350 each coordinate Zn(2+).

It belongs to the peptidase M20A family. DapE subfamily. In terms of assembly, homodimer. It depends on Zn(2+) as a cofactor. The cofactor is Co(2+).

It carries out the reaction N-succinyl-(2S,6S)-2,6-diaminopimelate + H2O = (2S,6S)-2,6-diaminopimelate + succinate. It functions in the pathway amino-acid biosynthesis; L-lysine biosynthesis via DAP pathway; LL-2,6-diaminopimelate from (S)-tetrahydrodipicolinate (succinylase route): step 3/3. Catalyzes the hydrolysis of N-succinyl-L,L-diaminopimelic acid (SDAP), forming succinate and LL-2,6-diaminopimelate (DAP), an intermediate involved in the bacterial biosynthesis of lysine and meso-diaminopimelic acid, an essential component of bacterial cell walls. This is Succinyl-diaminopimelate desuccinylase from Acinetobacter baumannii (strain AB0057).